A 540-amino-acid polypeptide reads, in one-letter code: Keratin, type II cytoskeletal 73 (540 aa).

The interval 1–131 is head; sequence MSRQFTYKSG…DPEIQKVRAQ (131 aa). Residues 132–167 are coil 1A; sequence EREQIKVLNNKFASFIDKVRFLEQQNQVLETKWELL. An IF rod domain is found at 132 to 445; sequence EREQIKVLNN…KLLEGEECRM (314 aa). A linker 1 region spans residues 168 to 186; it reads QQLDLNNCKNNLEPILEGY. The tract at residues 187 to 278 is coil 1B; sequence ISNLRKQLET…CLYEGETAQI (92 aa). A linker 12 region spans residues 279–302; it reads QSHISDTSIILSMDNNRNLDLDSI. Positions 303 to 441 are coil 2; that stretch reads IAEVRAQYEE…ATYRKLLEGE (139 aa). Residues 442–540 are tail; it reads ECRMSGEYTN…LSSPTKKTMR (99 aa). Positions 502 to 540 are disordered; it reads SGNCSPRGEARTRLGSASEFRDSQGKTLALSSPTKKTMR. The segment covering 526 to 540 has biased composition (polar residues); it reads GKTLALSSPTKKTMR.

Belongs to the intermediate filament family. Heterotetramer of two type I and two type II keratins. Highly expressed in hair follicles from scalp. In hair, it is specifically present in the inner root sheath (IRS) of the hair follicle. Present in the IRS cuticle, but not in Henle or Huxley layers of the IRS. In the IRS cuticle, it is expressed between the lowermost bulb region of the cuticle and the region where Henle cells undergo abrupt terminal differentiation. Detected up to the uppermost cortex region where cuticle cells terminally differentiate (at protein level).

Its function is as follows. Has a role in hair formation. Specific component of keratin intermediate filaments in the inner root sheath (IRS) of the hair follicle. In Homo sapiens (Human), this protein is Keratin, type II cytoskeletal 73 (KRT73).